The sequence spans 160 residues: Phosphopantetheine adenylyltransferase (160 aa).

Residue Thr-9 coordinates substrate. ATP is bound by residues 9–10 and His-17; that span reads TF. Positions 41, 73, and 87 each coordinate substrate. Residues 88–90, Glu-98, and 123–129 contribute to the ATP site; these read GLR and YSFLSSS.

It belongs to the bacterial CoaD family. In terms of assembly, homohexamer. Mg(2+) serves as cofactor.

It is found in the cytoplasm. It catalyses the reaction (R)-4'-phosphopantetheine + ATP + H(+) = 3'-dephospho-CoA + diphosphate. Its pathway is cofactor biosynthesis; coenzyme A biosynthesis; CoA from (R)-pantothenate: step 4/5. Its function is as follows. Reversibly transfers an adenylyl group from ATP to 4'-phosphopantetheine, yielding dephospho-CoA (dPCoA) and pyrophosphate. In Moorella thermoacetica (strain ATCC 39073 / JCM 9320), this protein is Phosphopantetheine adenylyltransferase.